Consider the following 436-residue polypeptide: uncharacterized protein (436 aa).

Transmembrane regions (helical) follow at residues 38–58 (ILIF…TVGA), 70–90 (VAGI…LLIG), 102–122 (LAGG…AALI), 125–145 (VALL…NLQV), 160–180 (TAAS…PNLV), 197–217 (GPFI…LIFL), 254–274 (IMVG…IMTM), 291–311 (LVIG…GLLV), 319–339 (MAIA…IAPA), 342–362 (LSLL…GLLT), 383–403 (FDVL…MVVA), and 409–429 (ILSI…IWYF).

This sequence belongs to the major facilitator superfamily.

It is found in the cell membrane. This is an uncharacterized protein from Bacillus subtilis (strain 168).